Consider the following 396-residue polypeptide: Cytochrome c biogenesis protein Ccs1 (396 aa).

3 helical membrane-spanning segments follow: residues 22 to 42 (LKFS…GTII), 79 to 99 (SNFY…CSLK), and 162 to 182 (AGPL…AIHA).

It belongs to the Ccs1/CcsB family. May interact with CcsA.

It is found in the plastid. The protein resides in the chloroplast thylakoid membrane. In terms of biological role, required during biogenesis of c-type cytochromes (cytochrome c6 and cytochrome f) at the step of heme attachment. This is Cytochrome c biogenesis protein Ccs1 from Cyanidium caldarium (Red alga).